Here is a 52-residue protein sequence, read N- to C-terminus: Insulin (52 aa).

3 cysteine pairs are disulfide-bonded: C7–C38, C19–C51, and C37–C42.

This sequence belongs to the insulin family. Heterodimer of a B chain and an A chain linked by two disulfide bonds.

The protein localises to the secreted. Its function is as follows. Insulin decreases blood glucose concentration. It increases cell permeability to monosaccharides, amino acids and fatty acids. It accelerates glycolysis, the pentose phosphate cycle, and glycogen synthesis in liver. In Polypterus senegalus (Senegal bichir), this protein is Insulin (ins).